The chain runs to 376 residues: Carbamoyl phosphate synthase small chain (376 aa).

The tract at residues 1–181 is nucleophile; the sequence is MSKAVLVLED…VEPDGPPGVS (181 aa). Residues 1-183 are CPSase; sequence MSKAVLVLED…PDGPPGVSRF (183 aa). Residues serine 46, glycine 232, glycine 234, phenylalanine 261, glutamine 264, asparagine 302, glycine 304, and phenylalanine 305 each contribute to the L-glutamine site. One can recognise a Glutamine amidotransferase type-1 domain in the interval 184–376; it reads TVAALDLGIK…FVELMAGEGR (193 aa). Residues histidine 350 and glutamate 352 contribute to the active site.

Belongs to the CarA family. As to quaternary structure, composed of two chains; the small (or glutamine) chain promotes the hydrolysis of glutamine to ammonia, which is used by the large (or ammonia) chain to synthesize carbamoyl phosphate. Tetramer of heterodimers (alpha,beta)4.

It catalyses the reaction hydrogencarbonate + L-glutamine + 2 ATP + H2O = carbamoyl phosphate + L-glutamate + 2 ADP + phosphate + 2 H(+). The enzyme catalyses L-glutamine + H2O = L-glutamate + NH4(+). Its pathway is amino-acid biosynthesis; L-arginine biosynthesis; carbamoyl phosphate from bicarbonate: step 1/1. The protein operates within pyrimidine metabolism; UMP biosynthesis via de novo pathway; (S)-dihydroorotate from bicarbonate: step 1/3. Functionally, small subunit of the glutamine-dependent carbamoyl phosphate synthetase (CPSase). CPSase catalyzes the formation of carbamoyl phosphate from the ammonia moiety of glutamine, carbonate, and phosphate donated by ATP, constituting the first step of 2 biosynthetic pathways, one leading to arginine and/or urea and the other to pyrimidine nucleotides. The small subunit (glutamine amidotransferase) binds and cleaves glutamine to supply the large subunit with the substrate ammonia. In Mycobacterium tuberculosis (strain CDC 1551 / Oshkosh), this protein is Carbamoyl phosphate synthase small chain.